Here is a 271-residue protein sequence, read N- to C-terminus: Methylthioribulose-1-phosphate dehydratase (271 aa).

Residue C123 participates in substrate binding. The Zn(2+) site is built by H141 and H143. Residue E166 is the Proton donor/acceptor of the active site. H231 provides a ligand contact to Zn(2+).

It belongs to the aldolase class II family. MtnB subfamily. It depends on Zn(2+) as a cofactor.

It localises to the cytoplasm. The enzyme catalyses 5-(methylsulfanyl)-D-ribulose 1-phosphate = 5-methylsulfanyl-2,3-dioxopentyl phosphate + H2O. Its pathway is amino-acid biosynthesis; L-methionine biosynthesis via salvage pathway; L-methionine from S-methyl-5-thio-alpha-D-ribose 1-phosphate: step 2/6. In terms of biological role, catalyzes the dehydration of methylthioribulose-1-phosphate (MTRu-1-P) into 2,3-diketo-5-methylthiopentyl-1-phosphate (DK-MTP-1-P). The chain is Methylthioribulose-1-phosphate dehydratase from Candida dubliniensis (strain CD36 / ATCC MYA-646 / CBS 7987 / NCPF 3949 / NRRL Y-17841) (Yeast).